A 766-amino-acid polypeptide reads, in one-letter code: MSVQSSSGSLEGPPSWSRLSTSPTPGSAAAARSLLNHTPPSGRPREGAMDELHSLDPRRQELLEARFTGVATGSTGSTGSCSVGAKASTNNESSNHSFGSLGSLSDKESETPEKKQSESSRGRKRKAESQNESSQGKSIGGRGHKISDYFEYQGGNGSSPVRGIPPAIRSPQNSHSHSTPSSSVRPNSPSPTALAFGDHPVVQPKQLSFKITQTDLTMLKLAALESTKNQDLEKKEGRIDDLLRANCDLRRQIDDQQKLLEKYKERLNKCISMSKKLLIEKSTQEKLSSREKSMQDRLRLGHFTTVRHGASFTEQWTDGFAFQNLVKQQEWVNQQREDIERQRKLLGKRKPPTANNSQAPATNSEAKQRKTKAVNGAENDPFVRPNLPQLLTLAEYHEQEEIFKLRLGHLKKEEAEIQAELERLERVRNLHIRELKRINNEDNSQFKDHPTLNERYLLLHLLGRGGFSEVYKAFDLYEQRYAAVKIHQLNKSWRDEKKENYHKHACREYRIHKELDHPRIVKLYDYFSLDTDTFCTVLEYCEGNDLDFYLKQHKLMSEKEARSIVMQIVNALRYLNEIKPPIIHYDLKPGNILLVDGTACGEIKITDFGLSKIMDDDSYGVDGMDLTSQGAGTYWYLPPECFVVGKEPPKISNKVDVWSVGVIFFQCLYGRKPFGHNQSQQDILQENTILKATEVQFPVKPVVSSEAKAFIRRCLAYRKEDRFDVHQLANDPYLLPHMRRSNSSGNLHMSGLTATPTPPSSSIITY.

The tract at residues 1–198 is disordered; sequence MSVQSSSGSL…PSPTALAFGD (198 aa). Over residues 20-33 the composition is skewed to low complexity; the sequence is STSPTPGSAAAARS. At Thr-38 the chain carries Phosphothreonine. Positions 43 to 64 are enriched in basic and acidic residues; it reads RPREGAMDELHSLDPRRQELLE. A phosphoserine mark is found at Ser-54, Ser-77, and Ser-80. Over residues 68–85 the composition is skewed to low complexity; the sequence is TGVATGSTGSTGSCSVGA. The segment covering 87–103 has biased composition (polar residues); the sequence is ASTNNESSNHSFGSLGS. A compositionally biased stretch (basic and acidic residues) spans 105–121; it reads SDKESETPEKKQSESSR. Phosphoserine is present on residues Ser-134, Ser-159, Ser-174, and Ser-176. Residues 170 to 192 show a composition bias toward low complexity; that stretch reads SPQNSHSHSTPSSSVRPNSPSPT. The stretch at 229 to 280 forms a coiled coil; that stretch reads NQDLEKKEGRIDDLLRANCDLRRQIDDQQKLLEKYKERLNKCISMSKKLLIE. Residues 344 to 381 form a disordered region; that stretch reads KLLGKRKPPTANNSQAPATNSEAKQRKTKAVNGAENDP. A compositionally biased stretch (polar residues) spans 353–365; the sequence is TANNSQAPATNSE. The stretch at 397-445 forms a coiled coil; the sequence is HEQEEIFKLRLGHLKKEEAEIQAELERLERVRNLHIRELKRINNEDNSQ. The Protein kinase domain occupies 456 to 734; sequence YLLLHLLGRG…VHQLANDPYL (279 aa). ATP is bound by residues 462 to 470 and Lys-485; that span reads LGRGGFSEV. The active-site Proton acceptor is Asp-586. Ser-743 is subject to Phosphoserine. Positions 745 to 766 are disordered; the sequence is GNLHMSGLTATPTPPSSSIITY.

Belongs to the protein kinase superfamily. Ser/Thr protein kinase family. As to quaternary structure, heterodimer with TLK2. Requires Mg(2+) as cofactor. Ubiquitously expressed in all tissues examined.

It localises to the nucleus. The enzyme catalyses L-seryl-[protein] + ATP = O-phospho-L-seryl-[protein] + ADP + H(+). It carries out the reaction L-threonyl-[protein] + ATP = O-phospho-L-threonyl-[protein] + ADP + H(+). With respect to regulation, cell-cycle regulated, maximal activity in S-phase. Inactivated by phosphorylation at Ser-743, potentially by CHEK1. In terms of biological role, rapidly and transiently inhibited by phosphorylation following the generation of DNA double-stranded breaks during S-phase. This is cell cycle checkpoint and ATM-pathway dependent and appears to regulate processes involved in chromatin assembly. Isoform 3 protects the cells from the ionizing radiation by facilitating the repair of DSBs. In vitro, phosphorylates histone H3 at 'Ser-10'. The chain is Serine/threonine-protein kinase tousled-like 1 (Tlk1) from Mus musculus (Mouse).